Consider the following 468-residue polypeptide: Aspartate ammonia-lyase (468 aa).

T99, S138, T139, N140, and T185 together coordinate L-aspartate. Positions 315–324 (GSSIMPGKVN) are SS loop. S316 serves as the catalytic Proton acceptor. Residues S317 and K322 each coordinate L-aspartate.

This sequence belongs to the class-II fumarase/aspartase family. Aspartase subfamily. In terms of assembly, homotetramer.

It carries out the reaction L-aspartate = fumarate + NH4(+). Its function is as follows. Catalyzes the reversible conversion of L-aspartate to fumarate and ammonia. This chain is Aspartate ammonia-lyase (aspA), found in Helicobacter pylori (strain ATCC 700392 / 26695) (Campylobacter pylori).